Here is a 160-residue protein sequence, read N- to C-terminus: Lymphocyte antigen 96 (160 aa).

The first 16 residues, Met-1–Thr-16, serve as a signal peptide directing secretion. 3 cysteine pairs are disulfide-bonded: Cys-25–Cys-51, Cys-37–Cys-148, and Cys-95–Cys-105. N-linked (GlcNAc...) asparagine glycans are attached at residues Asn-26, Asn-77, and Asn-101. The tract at residues Phe-119 to Gly-123 is interaction with lipopolysaccharide. N-linked (GlcNAc...) asparagine glycosylation is present at Asn-150.

Heterogeneous homomer formed from homodimers; disulfide-linked. Belongs to the lipopolysaccharide (LPS) receptor, a multi-protein complex containing at least CD14, LY96 and TLR4. Binds to the extracellular domains of TLR2 and TLR4. Ligand binding induces interaction with TLR4 and oligomerization of the complex. N-glycosylated.

The protein localises to the secreted. It localises to the extracellular space. In terms of biological role, binds bacterial lipopolysaccharide (LPS). Cooperates with TLR4 in the innate immune response to bacterial lipopolysaccharide (LPS), and with TLR2 in the response to cell wall components from Gram-positive and Gram-negative bacteria. Enhances TLR4-dependent activation of NF-kappa-B. Cells expressing both LY96 and TLR4, but not TLR4 alone, respond to LPS. In Cricetulus griseus (Chinese hamster), this protein is Lymphocyte antigen 96 (LY96).